A 146-amino-acid polypeptide reads, in one-letter code: Late protein OPG112 (146 aa).

The helical transmembrane segment at 10 to 31 (LAMTAFFGELNTLDIMALIMSI) threads the bilayer.

It belongs to the orthopoxvirus OPG112 family.

The protein localises to the host membrane. It localises to the host cytoplasm. Functionally, contributes to the formation of crescents and immature virions (IV). Interacts with phosphatidylinositol-3-phosphate (PI3P) and phosphatidylinositol-4-phosphate (PI4P) lipids in order to form virion membranes. Mechanistically, mediates proper formation of OPG125-hexamers, and hence the honey comb lattice and spherical immature virus. The sequence is that of Late protein OPG112 (OPG112) from Cynomys gunnisoni (Gunnison's prairie dog).